Reading from the N-terminus, the 331-residue chain is Olfactory receptor 6B3 (331 aa).

At 1–25 the chain is on the extracellular side; it reads MSGENVTRVGTFILVGFPTAPGLQY. Asn-5 is a glycosylation site (N-linked (GlcNAc...) asparagine). A helical transmembrane segment spans residues 26–46; that stretch reads LLFLLFLLTYLFVLVENLAII. Topologically, residues 47-54 are cytoplasmic; the sequence is LTVWSSTS. A helical transmembrane segment spans residues 55–75; it reads LHRPMYYFLSSMSFLEIWYVS. The Extracellular portion of the chain corresponds to 76–99; it reads DITPKMLEGFLLQQKRISFVGCMT. Cysteines 97 and 189 form a disulfide. A helical membrane pass occupies residues 100 to 120; the sequence is QLYFFSSLVCTECVLLASMAY. The Cytoplasmic portion of the chain corresponds to 121–139; sequence DRYVAICHPLRYHVLVTPG. Residues 140–160 form a helical membrane-spanning segment; the sequence is LCLQLVGFSFVSGFTISMIKV. At 161-196 the chain is on the extracellular side; it reads CFISSVTFCGSNVLNHFFCDISPILKLACTDFSTAE. Residues 197–217 traverse the membrane as a helical segment; sequence LVDFILAFIILVFPLLATMLS. Residues 218-237 are Cytoplasmic-facing; the sequence is YAHITLAVLRIPSATGCWRA. The chain crosses the membrane as a helical span at residues 238-258; it reads FFTCASHLTVVTVFYTALLFM. Residues 259 to 271 are Extracellular-facing; sequence YVRPQAIDSRSSN. A helical membrane pass occupies residues 272 to 292; sequence KLISVLYTVITPILNPLIYCL. Topologically, residues 293 to 331 are cytoplasmic; that stretch reads RNKEFKNALKKAFGLTSCAVEGRLSSLLELHLQIHSQPL.

Belongs to the G-protein coupled receptor 1 family.

The protein resides in the cell membrane. Functionally, odorant receptor. This is Olfactory receptor 6B3 (OR6B3) from Homo sapiens (Human).